The sequence spans 170 residues: Mitochondrial fission 1 protein A (170 aa).

One copy of the TPR repeat lies at 90-123 (REKLYLLAVGYYRSGNYSRSRQLVDRCIEMQADW). A helical membrane pass occupies residues 142–162 (VIGIGITATAFGAVGLIAGGI).

It belongs to the FIS1 family. As to quaternary structure, interacts with ARC5.

It is found in the mitochondrion outer membrane. The protein localises to the peroxisome membrane. In terms of biological role, component of the peroxisomal and mitochondrial division machineries. Plays a role in promoting the fission of mitochondria and peroxisomes. This is Mitochondrial fission 1 protein A (FIS1A) from Arabidopsis thaliana (Mouse-ear cress).